The following is a 56-amino-acid chain: Alpha-conotoxin TxIA (56 aa).

Positions M1–S16 are cleaved as a signal peptide. A propeptide spanning residues F17–K39 is cleaved from the precursor. 2 cysteine pairs are disulfide-bonded: C41/C47 and C42/C55. A ser-Xaa-Pro motif, crucial for potent interaction with nAChR region spans residues S43–P45. A 4-hydroxyproline; partial mark is found at P45 and P46. The residue at position 55 (C55) is a Cysteine amide.

This sequence belongs to the conotoxin A superfamily. Post-translationally, exists in 4 different forms, depending on hydroxylations. Tx1a-PP does not contain hydroxyproline, tx1a-OP has one hydroxyproline at position 45, tx1a-PO has one hydroxyproline at position 46, and tx1a-PP has two hydroxyprolines at positions 45 and 46. Expressed by the venom duct. Tx1a that containing 1 or 2 non-hydroxylated prolines are mostly present in part 5 of the venom duct (distal part near the pharynx), whereas tx1a-OO (with 2 hydroxyprolines) is mostly present in part 4 of the venom duct (follewed by part 3).

Its subcellular location is the secreted. Functionally, alpha-conotoxins act on postsynaptic membranes, they bind to the nicotinic acetylcholine receptors (nAChR) and thus inhibit them. This toxin inhibits rat alpha-3-beta-2/CHRNA3-CHRNB2 (IC(50)=3.5 nM), rat alpha-7/CHRNA7 (IC(50)=392 nM) nAChR, and the L.stagnalis soluble acetylcholine receptor (all tested without hydroxyproline). This chain is Alpha-conotoxin TxIA, found in Conus textile (Cloth-of-gold cone).